A 149-amino-acid polypeptide reads, in one-letter code: uncharacterized protein (149 aa).

This is an uncharacterized protein from Acanthamoeba polyphaga mimivirus (APMV).